The chain runs to 245 residues: Adapter protein MecA (245 aa).

This sequence belongs to the MecA family. As to quaternary structure, homodimer.

In terms of biological role, enables the recognition and targeting of unfolded and aggregated proteins to the ClpC protease or to other proteins involved in proteolysis. The sequence is that of Adapter protein MecA from Streptococcus pneumoniae (strain ATCC BAA-255 / R6).